A 549-amino-acid polypeptide reads, in one-letter code: Probable glucomannan 4-beta-mannosyltransferase 4 (549 aa).

Residues 35-55 (VAPVLQFAVWACMAMSVMLVL) form a helical membrane-spanning segment. Residue Asp151 is part of the active site. 2 residues coordinate substrate: Asp210 and Asp212. Asp304 is an active-site residue. 4 helical membrane passes run 383–403 (VVAPILTFLFYCVVIPLSVMV), 406–426 (VSIPVWGMVYIPTAITIMNAI), 497–517 (IYIPELMVAFYLLVCASYDLV), and 523–543 (YYLYIYLQAFAFIALGFGFAG).

Belongs to the glycosyltransferase 2 family. Plant cellulose synthase-like A subfamily.

Its subcellular location is the golgi apparatus membrane. It catalyses the reaction GDP-mannose + (glucomannan)n = GDP + (glucomannan)n+1.. Probable mannan synthase which consists of a 4-beta-mannosyltransferase activity on mannan using GDP-mannose. The beta-1,4-mannan product is the backbone for galactomannan synthesis by galactomannan galactosyltransferase. Galactomannan is a noncellulosic polysaccharides of plant cell wall. The chain is Probable glucomannan 4-beta-mannosyltransferase 4 from Oryza sativa subsp. japonica (Rice).